Here is a 676-residue protein sequence, read N- to C-terminus: Electrogenic aspartate/glutamate antiporter SLC25A13, mitochondrial (676 aa).

Position 2 is an N-acetylalanine (Ala-2). The segment at 2 to 295 (AAAKVALTKR…TLADIERIAP (294 aa)) is regulatory N-terminal domain. Residues 2–332 (AAAKVALTKR…LLQLAESAYR (331 aa)) are Mitochondrial intermembrane-facing. Lys-18 is subject to N6-acetyllysine. EF-hand domains follow at residues 51 to 86 (SQPN…SVLC), 87 to 122 (APDA…TTIH), 123 to 157 (QHIP…FLLE), and 158 to 193 (IQLE…IRPH). Positions 66, 68, 70, 72, and 77 each coordinate Ca(2+). The segment at 296–311 (LEEGMLPFNLAEAQRQ) is linker loop domain. The segment at 322 to 613 (FLLQLAESAY…LQRWFYVDFG (292 aa)) is carrier domain. Solcar repeat units follow at residues 327–419 (AESA…VRDK), 427–511 (VPLL…VKAS), and 519–607 (VSPG…LQRW). Residues 333-350 (FGLGSIAGAVGATAVYPI) traverse the membrane as a helical segment. Residues 351-393 (DLVKTRMQNQRSTGSFVGELMYKNSFDCFKKVLRYEGFFGLYR) are Mitochondrial matrix-facing. An N6-acetyllysine mark is found at Lys-354 and Lys-373. Residues 394–413 (GLLPQLLGVAPEKAIKLTVN) form a helical membrane-spanning segment. Residues 414–436 (DFVRDKFMHKDGSVPLLAEIFAG) are Mitochondrial intermembrane-facing. Residues 437–450 (GCAGGSQVIFTNPL) form a helical membrane-spanning segment. At 451–485 (EIVKIRLQVAGEITTGPRVSALSVVRDLGFFGIYK) the chain is on the mitochondrial matrix side. N6-methyllysine is present on Lys-454. Lys-485 carries the post-translational modification N6-acetyllysine; alternate. An N6-succinyllysine; alternate modification is found at Lys-485. Residues 486 to 505 (GAKACFLRDIPFSAIYFPCY) traverse the membrane as a helical segment. The Mitochondrial intermembrane segment spans residues 506–524 (AHVKASFANEDGQVSPGSL). The helical transmembrane segment at 525 to 542 (LLAGAIAGMPAASLVTPA) threads the bilayer. The Mitochondrial matrix segment spans residues 543–581 (DVIKTRLQVAARAGQTTYNGVTDCFRKILREEGPKALWK). Lys-581 carries the N6-succinyllysine modification. A helical transmembrane segment spans residues 582-601 (GVAARVFRSSPQFGVTLLTY). The Mitochondrial intermembrane portion of the chain corresponds to 602–676 (ELLQRWFYVD…STSKVTAGDS (75 aa)). The segment at 614-676 (GVKPVGSEPV…STSKVTAGDS (63 aa)) is C-terminal domain. Lys-663 is modified (N6-acetyllysine). Position 667 is a phosphoserine (Ser-667).

Belongs to the mitochondrial carrier (TC 2.A.29) family. As to quaternary structure, homodimer (via N-terminus). At 10.5 dpc, expressed in branchial arches, a well as in the limb and tail buds. At 13.5 dpc expression is predominant in epithelial structures and the forebrain, kidney and liver. Expression in liver is maintained into adulthood.

Its subcellular location is the mitochondrion inner membrane. It carries out the reaction L-aspartate(in) + L-glutamate(out) + H(+)(out) = L-aspartate(out) + L-glutamate(in) + H(+)(in). The enzyme catalyses 3-sulfino-L-alanine(out) + L-glutamate(in) + H(+)(in) = 3-sulfino-L-alanine(in) + L-glutamate(out) + H(+)(out). The catalysed reaction is 3-sulfino-L-alanine(out) + L-aspartate(in) = 3-sulfino-L-alanine(in) + L-aspartate(out). In terms of biological role, mitochondrial electrogenic aspartate/glutamate antiporter that favors efflux of aspartate and entry of glutamate and proton within the mitochondria as part of the malate-aspartate shuttle. Also mediates the uptake of L-cysteinesulfinate (3-sulfino-L-alanine) by mitochondria in exchange of L-glutamate and proton. Can also exchange L-cysteinesulfinate with aspartate in their anionic form without any proton translocation. Lacks transport activity towards gamma-aminobutyric acid (GABA). In Mus musculus (Mouse), this protein is Electrogenic aspartate/glutamate antiporter SLC25A13, mitochondrial.